The following is a 1032-amino-acid chain: Putative oxidoreductase YgfK (1032 aa).

The 31-residue stretch at Arg928–Lys958 folds into the 4Fe-4S ferredoxin-type domain. Positions 938, 941, 944, and 948 each coordinate [4Fe-4S] cluster.

It depends on [4Fe-4S] cluster as a cofactor.

Could be an iron-sulfur flavoprotein with NADPH:O(2) oxidoreductase activity. This Escherichia coli O157:H7 protein is Putative oxidoreductase YgfK (ygfK).